A 379-amino-acid chain; its full sequence is Chaperone protein DnaJ (379 aa).

Residues 7-72 enclose the J domain; that stretch reads CYYETLEVER…DKRAAYDRYG (66 aa). The segment at 135–213 adopts a CR-type zinc-finger fold; sequence GKTAQIEIPV…CTGSGRVTKE (79 aa). Residues C148, C151, C165, C168, C187, C190, C201, and C204 each coordinate Zn(2+). CXXCXGXG motif repeat units lie at residues 148–155, 165–172, 187–194, and 201–208; these read CESCSGTG, CSTCGGAG, CPSCQGRG, and CPSCTGSG.

This sequence belongs to the DnaJ family. As to quaternary structure, homodimer. It depends on Zn(2+) as a cofactor.

The protein localises to the cytoplasm. Its function is as follows. Participates actively in the response to hyperosmotic and heat shock by preventing the aggregation of stress-denatured proteins and by disaggregating proteins, also in an autonomous, DnaK-independent fashion. Unfolded proteins bind initially to DnaJ; upon interaction with the DnaJ-bound protein, DnaK hydrolyzes its bound ATP, resulting in the formation of a stable complex. GrpE releases ADP from DnaK; ATP binding to DnaK triggers the release of the substrate protein, thus completing the reaction cycle. Several rounds of ATP-dependent interactions between DnaJ, DnaK and GrpE are required for fully efficient folding. Also involved, together with DnaK and GrpE, in the DNA replication of plasmids through activation of initiation proteins. This chain is Chaperone protein DnaJ, found in Rhodopseudomonas palustris (strain HaA2).